Consider the following 614-residue polypeptide: DNA mismatch repair protein MutL (614 aa).

It belongs to the DNA mismatch repair MutL/HexB family.

This protein is involved in the repair of mismatches in DNA. It is required for dam-dependent methyl-directed DNA mismatch repair. May act as a 'molecular matchmaker', a protein that promotes the formation of a stable complex between two or more DNA-binding proteins in an ATP-dependent manner without itself being part of a final effector complex. This chain is DNA mismatch repair protein MutL, found in Chlorobium phaeovibrioides (strain DSM 265 / 1930) (Prosthecochloris vibrioformis (strain DSM 265)).